The chain runs to 173 residues: ATP synthase subunit b (173 aa).

Residues 25–45 (LINLVIVIGVLYWFLKGFLGG) traverse the membrane as a helical segment.

The protein belongs to the ATPase B chain family. F-type ATPases have 2 components, F(1) - the catalytic core - and F(0) - the membrane proton channel. F(1) has five subunits: alpha(3), beta(3), gamma(1), delta(1), epsilon(1). F(0) has four main subunits: a(1), b(1), b'(1) and c(10-14). The alpha and beta chains form an alternating ring which encloses part of the gamma chain. F(1) is attached to F(0) by a central stalk formed by the gamma and epsilon chains, while a peripheral stalk is formed by the delta, b and b' chains.

The protein resides in the cellular thylakoid membrane. Functionally, f(1)F(0) ATP synthase produces ATP from ADP in the presence of a proton or sodium gradient. F-type ATPases consist of two structural domains, F(1) containing the extramembraneous catalytic core and F(0) containing the membrane proton channel, linked together by a central stalk and a peripheral stalk. During catalysis, ATP synthesis in the catalytic domain of F(1) is coupled via a rotary mechanism of the central stalk subunits to proton translocation. Its function is as follows. Component of the F(0) channel, it forms part of the peripheral stalk, linking F(1) to F(0). The protein is ATP synthase subunit b of Synechococcus sp. (strain CC9311).